A 309-amino-acid polypeptide reads, in one-letter code: RING finger protein mug145 (309 aa).

A helical transmembrane segment spans residues 23-43; that stretch reads ILLFALVIILSVIFINFFFFY. An RING-type; atypical zinc finger spans residues 205–247; sequence CIICYADYAFDDILRVLPCEHVFHTQCIDTWMTTMKASCPLCN.

Its subcellular location is the membrane. Has a role in meiosis. This is RING finger protein mug145 (mug145) from Schizosaccharomyces pombe (strain 972 / ATCC 24843) (Fission yeast).